The primary structure comprises 306 residues: Mitochondrial glycine transporter (306 aa).

Solcar repeat units lie at residues 25–114 (QPVI…LKQY), 121–205 (PTAL…TKNV), and 217–301 (LVPV…MMAK). 6 helical membrane passes run 31 to 56 (FLCG…TRLQ), 89 to 115 (GMSP…KQYF), 127 to 152 (VILG…TRYE), 180 to 203 (GLTA…SQTK), 221 to 247 (VNFS…KTHM), and 276 to 294 (GSVP…AWTV).

The protein belongs to the mitochondrial carrier (TC 2.A.29) family. SLC25A38 subfamily.

The protein localises to the mitochondrion inner membrane. The catalysed reaction is glycine(in) = glycine(out). In terms of biological role, mitochondrial glycine transporter that imports glycine into the mitochondrial matrix. Plays an important role in providing glycine for the first enzymatic step in heme biosynthesis, the condensation of glycine with succinyl-CoA to produce 5-aminolevulinate (ALA) in the mitochondrial matrix. Required during erythropoiesis. Its function is as follows. Plays a role as pro-apoptotic protein that induces caspase-dependent apoptosis. The protein is Mitochondrial glycine transporter of Ovis aries (Sheep).